Reading from the N-terminus, the 490-residue chain is Serine hydroxymethyltransferase (490 aa).

(6S)-5,6,7,8-tetrahydrofolate contacts are provided by residues leucine 179 and 183–185 (GHL). Lysine 291 carries the post-translational modification N6-(pyridoxal phosphate)lysine. Lysine 362 participates in a covalent cross-link: Isoglutamyl lysine isopeptide (Lys-Gln) (interchain with Q-Cter in protein Pup).

Belongs to the SHMT family. Homodimer. Pyridoxal 5'-phosphate serves as cofactor.

Its subcellular location is the cytoplasm. It catalyses the reaction (6R)-5,10-methylene-5,6,7,8-tetrahydrofolate + glycine + H2O = (6S)-5,6,7,8-tetrahydrofolate + L-serine. It functions in the pathway one-carbon metabolism; tetrahydrofolate interconversion. The protein operates within amino-acid biosynthesis; glycine biosynthesis; glycine from L-serine: step 1/1. Its function is as follows. Catalyzes the reversible interconversion of serine and glycine with tetrahydrofolate (THF) serving as the one-carbon carrier. This reaction serves as the major source of one-carbon groups required for the biosynthesis of purines, thymidylate, methionine, and other important biomolecules. Also exhibits THF-independent aldolase activity toward beta-hydroxyamino acids, producing glycine and aldehydes, via a retro-aldol mechanism. The sequence is that of Serine hydroxymethyltransferase from Mycolicibacterium smegmatis (strain ATCC 700084 / mc(2)155) (Mycobacterium smegmatis).